Here is a 450-residue protein sequence, read N- to C-terminus: N-lysine methyltransferase SETD6 (450 aa).

A compositionally biased stretch (basic residues) spans 1-10 (MATQAKRRRV). The interval 1-20 (MATQAKRRRVAGPAGSDDDP) is disordered. The region spanning 39–263 (PKVAVSRQGT…KGHEIFNTYG (225 aa)) is the SET domain. Lys-40 is modified (N6-methylated lysine; by autocatalysis). An S-adenosyl-L-methionine-binding site is contributed by 50–52 (AGY). Trp-99 is a binding site for substrate. Lys-156 is modified (N6-methylated lysine; by autocatalysis). Tyr-200 is an S-adenosyl-L-methionine binding site. 2 residues coordinate substrate: Ser-201 and Gln-203. S-adenosyl-L-methionine-binding positions include 228-229 (NH) and Tyr-274. Residue Lys-349 is modified to N6-methylated lysine; by autocatalysis.

Belongs to the class V-like SAM-binding methyltransferase superfamily. Histone-lysine methyltransferase family. SETD6 subfamily. Monomer, homodimer and homotrimer; these structures are stabilized in the presence of S-adenosyl-L-methionine (SAM). Automethylated.

The protein localises to the nucleus. It catalyses the reaction L-lysyl-[protein] + S-adenosyl-L-methionine = N(6)-methyl-L-lysyl-[protein] + S-adenosyl-L-homocysteine + H(+). The enzyme catalyses L-lysyl(8)-[histone H2AZ] + S-adenosyl-L-methionine = N(6)-methyl-L-lysyl(8)-[histone H2AZ] + S-adenosyl-L-homocysteine + H(+). Its function is as follows. Protein-lysine N-methyltransferase. Monomethylates 'Lys-310' of the RELA subunit of NF-kappa-B complex, leading to down-regulation of NF-kappa-B transcription factor activity. Monomethylates 'Lys-8' of H2AZ (H2AZK8me1). Required for the maintenance of embryonic stem cell self-renewal. Methylates PAK4. This is N-lysine methyltransferase SETD6 (SETD6) from Bos taurus (Bovine).